We begin with the raw amino-acid sequence, 575 residues long: Centrosomal protein POC5 (575 aa).

The disordered stretch occupies residues 1-26 (MSSDEEKYSLPVVQNDSSRGSSVSSN). Phosphoserine is present on residues Ser-105 and Ser-109. A Centrin-binding (CBR) 1 repeat occupies 142–173 (HEILVSDFLVSDENLQKMENVLDLWSSGLKTN). Residues 191-222 (MEMRKEKEKHAAHLKQLCNQINELKELQKTFE) adopt a coiled-coil conformation. Centrin-binding (CBR) repeat units lie at residues 231–262 (VISS…HVRA) and 263–295 (RQDV…VQKQ). Residues 316 to 355 (SNDYEAKVAMLSGALENAKAEIQRMQHEKEHFEDSMKKAF) are a coiled coil. Disordered regions lie at residues 376–411 (AGID…MPLP) and 538–575 (KYPR…KVVD). Residues 382–400 (NNKKEEYGPGVQGKEHSAH) show a composition bias toward basic and acidic residues. N6-acetyllysine is present on Lys-538. The span at 545-569 (PESSTSASRSLGTRSAHTQSLTSVH) shows a compositional bias: polar residues. Position 564 is a phosphoserine (Ser-564).

This sequence belongs to the POC5 family. As to quaternary structure, interacts with CETN2 and CETN3. Forms a microtubule-associated complex with POC1B, CETN2 and FAM161A. Interacts with CCDC15. Post-translationally, hyperphosphorylated during recruitment to procentrioles in G2/M phase.

It is found in the cytoplasm. The protein localises to the cytoskeleton. Its subcellular location is the microtubule organizing center. The protein resides in the centrosome. It localises to the centriole. In terms of biological role, essential for the assembly of the distal half of centrioles, required for centriole elongation. Acts as a negative regulator of centriole elongation. In Homo sapiens (Human), this protein is Centrosomal protein POC5 (POC5).